The following is a 210-amino-acid chain: Large ribosomal subunit protein bL25 (210 aa).

Belongs to the bacterial ribosomal protein bL25 family. CTC subfamily. In terms of assembly, part of the 50S ribosomal subunit; part of the 5S rRNA/L5/L18/L25 subcomplex. Contacts the 5S rRNA. Binds to the 5S rRNA independently of L5 and L18.

This is one of the proteins that binds to the 5S RNA in the ribosome where it forms part of the central protuberance. The sequence is that of Large ribosomal subunit protein bL25 from Saccharophagus degradans (strain 2-40 / ATCC 43961 / DSM 17024).